We begin with the raw amino-acid sequence, 310 residues long: E3 ubiquitin-protein ligase CSU1 (310 aa).

Residues 43–67 form an RING-type 1; degenerate zinc finger; sequence CSLCLKPFIDPMCCHKGHVFCRECI. Residues 75 to 95 adopt a coiled-coil conformation; sequence KKDIQRRLAAHSSQKKQDKDE. Residues 110 to 138 form a disordered region; sequence EFDQQNHSAMPRNSDKNHNEDKNGFHGAN. Residues 122–133 show a composition bias toward basic and acidic residues; the sequence is NSDKNHNEDKNG. An RING-type 2 zinc finger spans residues 221-263; that stretch reads CPSCKVTLTNTMSLVALSSCGHVFCKKCAEKFMPVDKVCLVCD.

Belongs to the NOSIP family.

It localises to the nucleus. The protein resides in the nucleus speckle. It catalyses the reaction S-ubiquitinyl-[E2 ubiquitin-conjugating enzyme]-L-cysteine + [acceptor protein]-L-lysine = [E2 ubiquitin-conjugating enzyme]-L-cysteine + N(6)-ubiquitinyl-[acceptor protein]-L-lysine.. It participates in protein modification; protein ubiquitination. Its function is as follows. RING-finger E3 ubiquitin-protein ligase that plays an major role in maintaining COP1 homeostasis in darkness. Negatively regulates COP1 protein accumulation by targeting COP1 for ubiquitination and subsequent proteasomal degradation in dark-grown seedlings. Negatively regulates the accumulation of SPA1 protein in the dark. The protein is E3 ubiquitin-protein ligase CSU1 of Arabidopsis thaliana (Mouse-ear cress).